The primary structure comprises 192 residues: MLLTVSGPPGAGKSTTADTLAATFGLEHVSGGDIFRELAAERGLTAVELNQQAEEDDQIDRDLDQRLRTIALERDDILLESRLAGWLAGDAADIRVWLDAPLNVRAGRIADREDKSISTAQEETRTREESEALRYQNYYNIDIHDHSIYDLRVNTARWPKTEVPDILEAAIAAYEPASDEGRFPIEDIIYDF.

ATP is bound at residue 7–15 (GPPGAGKST).

This sequence belongs to the cytidylate kinase family. Type 2 subfamily.

Its subcellular location is the cytoplasm. It catalyses the reaction CMP + ATP = CDP + ADP. The enzyme catalyses dCMP + ATP = dCDP + ADP. This is Cytidylate kinase from Haloquadratum walsbyi (strain DSM 16790 / HBSQ001).